Consider the following 539-residue polypeptide: Propionyl-CoA carboxylase beta chain, mitochondrial (539 aa).

The N-terminal 28 residues, 1 to 28, are a transit peptide targeting the mitochondrion; sequence MAAAVRVTAARARLRVVVRSLHAGVRSL. A CoA carboxyltransferase N-terminal domain is found at 32-290; that stretch reads PVSVNERIEN…SNQDPAPIRE (259 aa). A carboxyltransferase region spans residues 32–533; that stretch reads PVSVNERIEN…SKKVQRPWRK (502 aa). Phosphoserine is present on serine 71. Lysine 99 carries the post-translational modification N6-acetyllysine; alternate. N6-succinyllysine; alternate is present on lysine 99. In terms of domain architecture, CoA carboxyltransferase C-terminal spans 294–533; it reads PSDRLVPELD…SKKVQRPWRK (240 aa). The interval 325–358 is acyl-CoA binding; that stretch reads DERDFFEIMPNYAKNIIVGFARMNGRTVGIVGNQ. 2 positions are modified to N6-acetyllysine; alternate: lysine 474 and lysine 489. Residues lysine 474 and lysine 489 each carry the N6-succinyllysine; alternate modification.

Belongs to the AccD/PCCB family. As to quaternary structure, the holoenzyme is a dodecamer composed of 6 PCCA/alpha subunits and 6 PCCB/beta subunits.

The protein localises to the mitochondrion matrix. It carries out the reaction propanoyl-CoA + hydrogencarbonate + ATP = (S)-methylmalonyl-CoA + ADP + phosphate + H(+). The enzyme catalyses butanoyl-CoA + hydrogencarbonate + ATP = (2S)-ethylmalonyl-CoA + ADP + phosphate + H(+). The protein operates within metabolic intermediate metabolism; propanoyl-CoA degradation; succinyl-CoA from propanoyl-CoA: step 1/3. In terms of biological role, this is one of the 2 subunits of the biotin-dependent propionyl-CoA carboxylase (PCC), a mitochondrial enzyme involved in the catabolism of odd chain fatty acids, branched-chain amino acids isoleucine, threonine, methionine, and valine and other metabolites. Propionyl-CoA carboxylase catalyzes the carboxylation of propionyl-CoA/propanoyl-CoA to D-methylmalonyl-CoA/(S)-methylmalonyl-CoA. Within the holoenzyme, the alpha subunit catalyzes the ATP-dependent carboxylation of the biotin carried by the biotin carboxyl carrier (BCC) domain, while the beta subunit then transfers the carboxyl group from carboxylated biotin to propionyl-CoA. Propionyl-CoA carboxylase also significantly acts on butyryl-CoA/butanoyl-CoA, which is converted to ethylmalonyl-CoA/(2S)-ethylmalonyl-CoA at a much lower rate. Other alternative minor substrates include (2E)-butenoyl-CoA/crotonoyl-CoA. The protein is Propionyl-CoA carboxylase beta chain, mitochondrial of Sus scrofa (Pig).